An 88-amino-acid polypeptide reads, in one-letter code: MKEKDNFEMVINLRKIKTGKRTGRSKRAVKFVRKIVARHFNADKVVIDPLLAKSISKNGNDKVVSKVRVVVSKVGEKIYLVRLAIKSR.

It belongs to the eukaryotic ribosomal protein eL31 family.

This Saccharolobus islandicus (strain Y.N.15.51 / Yellowstone #2) (Sulfolobus islandicus) protein is Large ribosomal subunit protein eL31.